We begin with the raw amino-acid sequence, 490 residues long: Glutamyl-tRNA(Gln) amidotransferase subunit A (490 aa).

Residues K78 and S158 each act as charge relay system in the active site. Residues 131–159 are disordered; sequence SNETSRFGPPINPWRRKGDNAGLTPGGSS. The active-site Acyl-ester intermediate is the S182.

This sequence belongs to the amidase family. GatA subfamily. As to quaternary structure, heterotrimer of A, B and C subunits.

It catalyses the reaction L-glutamyl-tRNA(Gln) + L-glutamine + ATP + H2O = L-glutaminyl-tRNA(Gln) + L-glutamate + ADP + phosphate + H(+). Functionally, allows the formation of correctly charged Gln-tRNA(Gln) through the transamidation of misacylated Glu-tRNA(Gln) in organisms which lack glutaminyl-tRNA synthetase. The reaction takes place in the presence of glutamine and ATP through an activated gamma-phospho-Glu-tRNA(Gln). This chain is Glutamyl-tRNA(Gln) amidotransferase subunit A, found in Hyphomonas neptunium (strain ATCC 15444).